Consider the following 550-residue polypeptide: Arginine--tRNA ligase (550 aa).

A 'HIGH' region motif is present at residues 130 to 140; that stretch reads ANPTGPIHLGG.

This sequence belongs to the class-I aminoacyl-tRNA synthetase family. Monomer.

Its subcellular location is the cytoplasm. The enzyme catalyses tRNA(Arg) + L-arginine + ATP = L-arginyl-tRNA(Arg) + AMP + diphosphate. This chain is Arginine--tRNA ligase, found in Rhodococcus erythropolis (strain PR4 / NBRC 100887).